Consider the following 111-residue polypeptide: Probable 4-amino-4-deoxy-L-arabinose-phosphoundecaprenol flippase subunit ArnE (111 aa).

Topologically, residues 1-35 (MIWLTLVFASLLSVAGQLCQKQATCFAAVNKRRKH) are cytoplasmic. The chain crosses the membrane as a helical span at residues 36 to 56 (IVLWLGLALACLGLAMVLWLL). Positions 40–109 (LGLALACLGL…IIGGIVILGS (70 aa)) constitute an EamA domain. Residues 57–60 (VLQN) are Periplasmic-facing. The helical transmembrane segment at 61–81 (VPVGIAYPMLSLNFVWVTLAA) threads the bilayer. Over 82 to 87 (VKLWHE) the chain is Cytoplasmic. The chain crosses the membrane as a helical span at residues 88–108 (PVSLRHWCGLAFIIGGIVILG). Residues 109-111 (STV) lie on the Periplasmic side of the membrane.

This sequence belongs to the ArnE family. As to quaternary structure, heterodimer of ArnE and ArnF.

It localises to the cell inner membrane. It participates in bacterial outer membrane biogenesis; lipopolysaccharide biosynthesis. Its function is as follows. Translocates 4-amino-4-deoxy-L-arabinose-phosphoundecaprenol (alpha-L-Ara4N-phosphoundecaprenol) from the cytoplasmic to the periplasmic side of the inner membrane. The polypeptide is Probable 4-amino-4-deoxy-L-arabinose-phosphoundecaprenol flippase subunit ArnE (Escherichia coli O81 (strain ED1a)).